A 76-amino-acid chain; its full sequence is ATP synthase subunit 9, mitochondrial (76 aa).

The next 2 helical transmembrane spans lie at 11–31 and 53–73; these read IGAG…GIVF and ILGF…AFLI.

It belongs to the ATPase C chain family. F-type ATPases have 2 components, CF(1) - the catalytic core - and CF(0) - the membrane proton channel. CF(1) has five subunits: alpha(3), beta(3), gamma(1), delta(1), epsilon(1). CF(0) has three main subunits: a, b and c.

The protein localises to the mitochondrion membrane. Functionally, this protein is one of the chains of the nonenzymatic membrane component (F0) of mitochondrial ATPase. In Chondrus crispus (Carrageen Irish moss), this protein is ATP synthase subunit 9, mitochondrial (ATP9).